The chain runs to 282 residues: Snake venom serine protease NaSP (282 aa).

The signal sequence occupies residues 1 to 18 (MVLIRVLASLLILQLSYS). Residues 19 to 56 (KSLDDGAKESAYDDEIQQSSWGNSTVNTTLTETVVIQL) constitute a propeptide that is removed on maturation. N-linked (GlcNAc...) asparagine glycans are attached at residues Asn41 and Asn45. In terms of domain architecture, Peptidase S1 spans 57 to 280 (IMGGSECYKS…YIDWIRGIIA (224 aa)). 5 disulfides stabilise this stretch: Cys63-Cys195, Cys82-Cys98, Cys174-Cys241, Cys206-Cys220, and Cys231-Cys256. Residue His97 is the Charge relay system of the active site. Asn135 is a glycosylation site (N-linked (GlcNAc...) asparagine). Asp142 acts as the Charge relay system in catalysis. Asn149 and Asn153 each carry an N-linked (GlcNAc...) asparagine glycan. Ser235 functions as the Charge relay system in the catalytic mechanism.

The protein belongs to the peptidase S1 family. Snake venom subfamily. Monomer. As to expression, expressed by the venom gland.

Its subcellular location is the secreted. Functionally, snake venom serine protease that may act in the hemostasis system of the prey. In Naja atra (Chinese cobra), this protein is Snake venom serine protease NaSP.